We begin with the raw amino-acid sequence, 396 residues long: Potassium channel subfamily K member 9 (396 aa).

Over 1-8 the chain is Cytoplasmic; sequence MKRQNVRT. Residues 9–29 traverse the membrane as a helical segment; it reads LSLIACTFTYLLVGAAVFDAL. The Extracellular segment spans residues 30 to 88; that stretch reads ESDHEMREEEKLKAEEVRLRGKYNISSDDYQQLELVILQSEPHRAGVQWKFAGSFYFAI. A glycan (N-linked (GlcNAc...) asparagine) is linked at N53. The pore-forming intramembrane region spans 89 to 101; it reads TVITTIGYGHAAP. Residues T93, I94, G95, and Y96 each contribute to the K(+) site. The interval 93-98 is selectivity filter 1; the sequence is TIGYGH. The Extracellular segment spans residues 102 to 107; sequence GTDAGK. The helical transmembrane segment at 108–128 threads the bilayer; that stretch reads AFCMFYAVLGIPLTLVMFQSL. Topologically, residues 129-158 are cytoplasmic; the sequence is GERMNTFVRYLLKRIKKCCGMRNTEVSMEN. Residues 159–179 form a helical membrane-spanning segment; sequence MVTVGFFSCMGTLCLGAAAFS. At 180-194 the chain is on the extracellular side; sequence QCEDWSFFHAYYYCF. An intramembrane region (pore-forming) is located at residues 195–207; sequence ITLTTIGFGDFVA. Residues T199, I200, G201, and F202 each coordinate K(+). Positions 199–204 are selectivity filter 2; sequence TIGFGD. At 208–218 the chain is on the extracellular side; that stretch reads LQSKGALQRKP. A helical transmembrane segment spans residues 219–239; it reads FYVAFSFMYILVGLTVIGAFL. Topologically, residues 240-396 are cytoplasmic; the sequence is NLVVLRFLTM…HRLHIRRKSI (157 aa). Positions 243–248 are X-gate; it reads VLRFLT.

It belongs to the two pore domain potassium channel (TC 1.A.1.8) family. Homodimer. Heterodimer with KCNK1. Heterodimer with KCNK3. As to expression, highly expressed in the CNS and at lower levels in the colon, kidney, liver, lung, spleen, stomach and skeletal muscle. The highest expression was found in the olfactory nuclei, piriform cortex, cerebellum, antedorsal thalmic nucleus, pontine nucleus, dorsal raphe and several nuclei in the medulla. Shows a non-homogeneous distribution in the hippocampus. Expressed at highest levels in the lateral posterior and inferior portions and at medium levels in neocortex. Expressed in motoneurons, including hypoglossal motoneurons (at protein level).

The protein resides in the cell membrane. It is found in the mitochondrion inner membrane. Its subcellular location is the cell projection. The protein localises to the dendrite. It catalyses the reaction K(+)(in) = K(+)(out). The catalysed reaction is Na(+)(in) = Na(+)(out). Its activity is regulated as follows. Activated by halothane and isoflurane. Inhibited by external acidification, diacylglycerol, anandamide and AGT/angiotensin II. Ruthenium red inhibits homomeric but not KCNK3:KCNK9 heteromeric channels. Its function is as follows. K(+) channel that conducts voltage-dependent outward rectifying currents upon membrane depolarization. Voltage sensing is coupled to K(+) electrochemical gradient in an 'ion flux gating' mode where outward but not inward ion flow opens the gate. Changes ion selectivity and becomes permeable to Na(+) ions in response to extracellular acidification. Protonation of the pH sensor His-98 stabilizes C-type inactivation conformation likely converting the channel from outward K(+)-conducting, to inward Na(+)-conducting to nonconductive state. Homo- and heterodimerizes to form functional channels with distinct regulatory and gating properties. Allows K(+) currents with fast-gating kinetics important for the repolarization and hyperpolarization phases of action potentials. In granule neurons, hyperpolarizes the resting membrane potential to limit intrinsic neuronal excitability, but once the action potential threshold is reached, supports high-frequency action potential firing and increased neuronal excitability. Homomeric and/or heteromeric KCNK3:KCNK9 channels operate in cerebellar granule cells, whereas heteromeric KCNK1:KCNK9 enables currents in hippocampal dentate gyrus granule neurons. Dispensable for central chemosensory respiration i.e. breathing controlled by brainstem CO2/pH, it rather conducts pH-sensitive currents and controls the firing rate of serotonergic raphe neurons involved in potentiation of the respiratory chemoreflex. In retinal ganglion cells, mediates outward rectifying currents that regulate action potentials in response to acidification of the synaptic cleft. Involved in transmission of image-forming and nonimage-forming visual information in the retina. In adrenal gland, contributes to the maintenance of a hyperpolarized resting membrane potential of aldosterone-producing cells at zona glomerulosa and limits aldosterone release as part of a regulatory mechanism that controls arterial blood pressure and electrolyte homeostasis. The sequence is that of Potassium channel subfamily K member 9 from Rattus norvegicus (Rat).